Here is a 314-residue protein sequence, read N- to C-terminus: Methionyl-tRNA formyltransferase (314 aa).

113-116 (SLLP) contacts (6S)-5,6,7,8-tetrahydrofolate.

Belongs to the Fmt family.

The catalysed reaction is L-methionyl-tRNA(fMet) + (6R)-10-formyltetrahydrofolate = N-formyl-L-methionyl-tRNA(fMet) + (6S)-5,6,7,8-tetrahydrofolate + H(+). Its function is as follows. Attaches a formyl group to the free amino group of methionyl-tRNA(fMet). The formyl group appears to play a dual role in the initiator identity of N-formylmethionyl-tRNA by promoting its recognition by IF2 and preventing the misappropriation of this tRNA by the elongation apparatus. In Pseudomonas syringae pv. tomato (strain ATCC BAA-871 / DC3000), this protein is Methionyl-tRNA formyltransferase.